Here is a 473-residue protein sequence, read N- to C-terminus: Aspartyl/glutamyl-tRNA(Asn/Gln) amidotransferase subunit B (473 aa).

The protein belongs to the GatB/GatE family. GatB subfamily. In terms of assembly, heterotrimer of A, B and C subunits.

The enzyme catalyses L-glutamyl-tRNA(Gln) + L-glutamine + ATP + H2O = L-glutaminyl-tRNA(Gln) + L-glutamate + ADP + phosphate + H(+). The catalysed reaction is L-aspartyl-tRNA(Asn) + L-glutamine + ATP + H2O = L-asparaginyl-tRNA(Asn) + L-glutamate + ADP + phosphate + 2 H(+). Functionally, allows the formation of correctly charged Asn-tRNA(Asn) or Gln-tRNA(Gln) through the transamidation of misacylated Asp-tRNA(Asn) or Glu-tRNA(Gln) in organisms which lack either or both of asparaginyl-tRNA or glutaminyl-tRNA synthetases. The reaction takes place in the presence of glutamine and ATP through an activated phospho-Asp-tRNA(Asn) or phospho-Glu-tRNA(Gln). This chain is Aspartyl/glutamyl-tRNA(Asn/Gln) amidotransferase subunit B, found in Finegoldia magna (strain ATCC 29328 / DSM 20472 / WAL 2508) (Peptostreptococcus magnus).